Consider the following 199-residue polypeptide: MSCMPISTKCNDIWVDFSCTGPSLSELQKKEPKAWAAILRSQRSQQTAEDDTIIGSICDKQGLCSKNEYAYSQYCACVNSGTLWAECAFAPCNGNKNAYKTTEHRNILTNKQCPSGLTICQNIAEYGGTGNISDLYQNFNCNSVINTFLINVMNHPFLTLILIILILVIIYRLMSSSGGKHNEDKLPPPSLIFSNLNNF.

A glycan (N-linked (GlcNAc...) asparagine; by host) is linked at N131. Residues 150 to 170 (INVMNHPFLTLILIILILVII) traverse the membrane as a helical segment.

Belongs to the asfivirus E199L family. As to quaternary structure, interacts with host PYCR2; this interaction results in autophagy activation. Contains intramolecular disulfide bonds.

Its subcellular location is the virion membrane. The protein resides in the host membrane. Functionally, essential for viral fusion with host endosomal membrane and core release. Not required for virus morphogenesis and egress. Induces complete autophagy through the interaction with and down-regulation of host PYCR2. The polypeptide is Inner membrane protein E199L (African swine fever virus (isolate Tick/Malawi/Lil 20-1/1983) (ASFV)).